A 690-amino-acid polypeptide reads, in one-letter code: Elongation factor G (690 aa).

One can recognise a tr-type G domain in the interval 8 to 283; the sequence is SKCRNIGIMA…AVVDFLPAPN (276 aa). Residues 17–24, 81–85, and 135–138 each bind GTP; these read AHIDAGKT, DTPGH, and NKMD.

Belongs to the TRAFAC class translation factor GTPase superfamily. Classic translation factor GTPase family. EF-G/EF-2 subfamily.

It localises to the cytoplasm. Catalyzes the GTP-dependent ribosomal translocation step during translation elongation. During this step, the ribosome changes from the pre-translocational (PRE) to the post-translocational (POST) state as the newly formed A-site-bound peptidyl-tRNA and P-site-bound deacylated tRNA move to the P and E sites, respectively. Catalyzes the coordinated movement of the two tRNA molecules, the mRNA and conformational changes in the ribosome. In Ehrlichia canis (strain Jake), this protein is Elongation factor G.